We begin with the raw amino-acid sequence, 927 residues long: Small conductance calcium-activated potassium channel protein (927 aa).

Over residues 1 to 31 (MSIQKLNDTTNSGYVSSEETDSLLVSSSNPS) the composition is skewed to polar residues. Disordered regions lie at residues 1–131 (MSIQ…EDVE), 181–251 (LSLK…VKSA), and 296–336 (HLHQ…SSST). Low complexity predominate over residues 45-62 (SNSTNGPTTGASTSSSGS). Over residues 63 to 77 (VSGGGGGSGSGGGSA) the composition is skewed to gly residues. 2 stretches are compositionally biased toward polar residues: residues 95-107 (TSTYLTSPQQSQH) and 200-214 (NLGTSSYQNLASSIP). 2 stretches are compositionally biased toward low complexity: residues 219–232 (SRCRACRNCSRRAS) and 296–308 (HLHQQQLQQSQQQ). Residues 314–336 (ITSSPTNGSRIIRQSSQPESSST) are compositionally biased toward polar residues. Residues 489 to 509 (ALVMGMFGIIVMVIENELSSA) traverse the membrane as a helical segment. The helical transmembrane segment at 530–550 (TVILLGLIVAYHALEVQLFMI) threads the bilayer. Residues 569 to 589 (IGLELFICAIHPIPGEYYFQW) traverse the membrane as a helical segment. Residues 609 to 629 (VALSLPMFLRLYLICRVMLLH) traverse the membrane as a helical segment. A helical membrane pass occupies residues 658-678 (LMTICPGTVLLVFMVSLWIIA). Positions 696 to 716 (LLNSMWLTAITFLCVGYGDIV) form an intramembrane region, pore-forming. A helical transmembrane segment spans residues 724 to 744 (GITLTCGMVGAGCTALLVAVV). A calmodulin-binding region spans residues 763–839 (DTQLTKRLKN…ITDMAKTQNT (77 aa)).

The protein belongs to the potassium channel KCNN family. SK subfamily. In terms of assembly, heterooligomer. The complex is composed of 4 channel subunits each of which binds to a calmodulin subunit which regulates the channel activity through calcium-binding.

It localises to the membrane. Functionally, forms a voltage-independent potassium channel activated by intracellular calcium. Activation is followed by membrane hyperpolarization. Thought to regulate neuronal excitability by contributing to the slow component of synaptic afterhyperpolarization. The channel is blocked by apamin. This chain is Small conductance calcium-activated potassium channel protein, found in Drosophila melanogaster (Fruit fly).